We begin with the raw amino-acid sequence, 179 residues long: Large ribosomal subunit protein uL5 (179 aa).

The protein belongs to the universal ribosomal protein uL5 family. In terms of assembly, part of the 50S ribosomal subunit; part of the 5S rRNA/L5/L18/L25 subcomplex. Contacts the 5S rRNA and the P site tRNA. Forms a bridge to the 30S subunit in the 70S ribosome.

In terms of biological role, this is one of the proteins that bind and probably mediate the attachment of the 5S RNA into the large ribosomal subunit, where it forms part of the central protuberance. In the 70S ribosome it contacts protein S13 of the 30S subunit (bridge B1b), connecting the 2 subunits; this bridge is implicated in subunit movement. Contacts the P site tRNA; the 5S rRNA and some of its associated proteins might help stabilize positioning of ribosome-bound tRNAs. This Saccharophagus degradans (strain 2-40 / ATCC 43961 / DSM 17024) protein is Large ribosomal subunit protein uL5.